A 236-amino-acid polypeptide reads, in one-letter code: Uridylate kinase (236 aa).

Residue K12–G15 coordinates ATP. The involved in allosteric activation by GTP stretch occupies residues G20–G25. A UMP-binding site is contributed by G54. 2 residues coordinate ATP: G55 and R59. Residues D72 and T133 to T140 each bind UMP. Residues N161, Y166, and D169 each coordinate ATP.

It belongs to the UMP kinase family. In terms of assembly, homohexamer.

It is found in the cytoplasm. It carries out the reaction UMP + ATP = UDP + ADP. Its pathway is pyrimidine metabolism; CTP biosynthesis via de novo pathway; UDP from UMP (UMPK route): step 1/1. With respect to regulation, allosterically activated by GTP. Inhibited by UTP. Its function is as follows. Catalyzes the reversible phosphorylation of UMP to UDP. The protein is Uridylate kinase of Alkaliphilus metalliredigens (strain QYMF).